The primary structure comprises 903 residues: Protein translocase subunit SecA (903 aa).

ATP-binding positions include Gln-87, 105 to 109 (GEGKT), and Asp-507. Disordered regions lie at residues 565 to 584 (ESRR…GDPG) and 855 to 877 (AEPG…LASQ). The Zn(2+) site is built by Cys-887, Cys-889, Cys-898, and His-899.

The protein belongs to the SecA family. In terms of assembly, monomer and homodimer. Part of the essential Sec protein translocation apparatus which comprises SecA, SecYEG and auxiliary proteins SecDF-YajC and YidC. Zn(2+) serves as cofactor.

It is found in the cell inner membrane. It localises to the cytoplasm. It catalyses the reaction ATP + H2O + cellular proteinSide 1 = ADP + phosphate + cellular proteinSide 2.. Functionally, part of the Sec protein translocase complex. Interacts with the SecYEG preprotein conducting channel. Has a central role in coupling the hydrolysis of ATP to the transfer of proteins into and across the cell membrane, serving both as a receptor for the preprotein-SecB complex and as an ATP-driven molecular motor driving the stepwise translocation of polypeptide chains across the membrane. In Chromobacterium violaceum (strain ATCC 12472 / DSM 30191 / JCM 1249 / CCUG 213 / NBRC 12614 / NCIMB 9131 / NCTC 9757 / MK), this protein is Protein translocase subunit SecA.